Reading from the N-terminus, the 207-residue chain is Glycerol-3-phosphate acyltransferase (207 aa).

Transmembrane regions (helical) follow at residues 4-24 (VVAT…SFAV), 58-78 (ILTL…AQWL), 86-106 (ETGI…PVFH), 120-140 (ILLA…LIIA), and 162-182 (VLMN…VLLI).

It belongs to the PlsY family. In terms of assembly, probably interacts with PlsX.

The protein localises to the cell inner membrane. The catalysed reaction is an acyl phosphate + sn-glycerol 3-phosphate = a 1-acyl-sn-glycero-3-phosphate + phosphate. Its pathway is lipid metabolism; phospholipid metabolism. Its function is as follows. Catalyzes the transfer of an acyl group from acyl-phosphate (acyl-PO(4)) to glycerol-3-phosphate (G3P) to form lysophosphatidic acid (LPA). This enzyme utilizes acyl-phosphate as fatty acyl donor, but not acyl-CoA or acyl-ACP. In Ralstonia pickettii (strain 12J), this protein is Glycerol-3-phosphate acyltransferase.